Consider the following 372-residue polypeptide: NAD(P)H-quinone oxidoreductase subunit 1 (372 aa).

8 helical membrane-spanning segments follow: residues Ile28–Val48, Trp97–Val117, Val130–Gly150, Leu176–Val196, Ile204–Leu224, Leu265–Pro285, Ser308–Leu328, and Val351–Gly371.

This sequence belongs to the complex I subunit 1 family. NDH-1 is composed of at least 11 different subunits.

The protein localises to the cellular thylakoid membrane. It carries out the reaction a plastoquinone + NADH + (n+1) H(+)(in) = a plastoquinol + NAD(+) + n H(+)(out). The enzyme catalyses a plastoquinone + NADPH + (n+1) H(+)(in) = a plastoquinol + NADP(+) + n H(+)(out). Its function is as follows. NDH-1 shuttles electrons from an unknown electron donor, via FMN and iron-sulfur (Fe-S) centers, to quinones in the respiratory and/or the photosynthetic chain. The immediate electron acceptor for the enzyme in this species is believed to be plastoquinone. Couples the redox reaction to proton translocation, and thus conserves the redox energy in a proton gradient. The polypeptide is NAD(P)H-quinone oxidoreductase subunit 1 (Picosynechococcus sp. (strain ATCC 27264 / PCC 7002 / PR-6) (Agmenellum quadruplicatum)).